A 421-amino-acid chain; its full sequence is UDP-N-acetylglucosamine 1-carboxyvinyltransferase (421 aa).

Residue 22 to 23 (KN) participates in phosphoenolpyruvate binding. Arg93 provides a ligand contact to UDP-N-acetyl-alpha-D-glucosamine. Cys117 serves as the catalytic Proton donor. Cys117 is modified (2-(S-cysteinyl)pyruvic acid O-phosphothioketal). UDP-N-acetyl-alpha-D-glucosamine contacts are provided by residues 122-126 (RPVDQ), Asp309, and Ile331.

Belongs to the EPSP synthase family. MurA subfamily.

It is found in the cytoplasm. The enzyme catalyses phosphoenolpyruvate + UDP-N-acetyl-alpha-D-glucosamine = UDP-N-acetyl-3-O-(1-carboxyvinyl)-alpha-D-glucosamine + phosphate. The protein operates within cell wall biogenesis; peptidoglycan biosynthesis. In terms of biological role, cell wall formation. Adds enolpyruvyl to UDP-N-acetylglucosamine. The chain is UDP-N-acetylglucosamine 1-carboxyvinyltransferase from Albidiferax ferrireducens (strain ATCC BAA-621 / DSM 15236 / T118) (Rhodoferax ferrireducens).